The following is a 352-amino-acid chain: Phosphoribosylformylglycinamidine cyclo-ligase (352 aa).

Belongs to the AIR synthase family.

Its subcellular location is the cytoplasm. The enzyme catalyses 2-formamido-N(1)-(5-O-phospho-beta-D-ribosyl)acetamidine + ATP = 5-amino-1-(5-phospho-beta-D-ribosyl)imidazole + ADP + phosphate + H(+). It participates in purine metabolism; IMP biosynthesis via de novo pathway; 5-amino-1-(5-phospho-D-ribosyl)imidazole from N(2)-formyl-N(1)-(5-phospho-D-ribosyl)glycinamide: step 2/2. The chain is Phosphoribosylformylglycinamidine cyclo-ligase from Pseudomonas entomophila (strain L48).